The following is a 298-amino-acid chain: Rhodomycin D methylesterase DnrP (298 aa).

Residues 25-277 (PLLLIAGGNL…VEIENMGHAL (253 aa)) form the AB hydrolase-1 domain.

The protein belongs to the methyl esterase DnrP family.

It catalyses the reaction rhodomycin D + H2O = 10-carboxy-13-deoxycarminomycin + methanol + H(+). The catalysed reaction is 4-O-methylrhodomycin D + H2O = 10-carboxy-13-deoxydaunorubicin + methanol + H(+). The protein operates within antibiotic biosynthesis; daunorubicin biosynthesis. It functions in the pathway antibiotic biosynthesis; carminomycin biosynthesis. Involved in the biosynthesis of the anthracyclines carminomycin and daunorubicin (daunomycin) which are aromatic polyketide antibiotics that exhibit high cytotoxicity and are widely applied in the chemotherapy of a variety of cancers. Catalyzes the removal of methyl group from the carbomethoxy group of rhodomycin D (10-carbomethoxy-13-deoxycarminomycin) and 4-O-methylrhodomycin D to yield 10-carboxy-13-deoxycarminomycin and 10-carboxy-13-deoxydaunorubicin, respectively. Could be also involved in the decarboxylation of 10-carboxy-13-deoxycarminomycin and 10-carboxy-13-deoxydaunorubicin to yield 13-deoxycarminomycin and 13-deoxydaunorubicin, respectively. It seems that DnrK may influence the ability of DnrP to carry out the decarboxylation. The protein is Rhodomycin D methylesterase DnrP (dnrP) of Streptomyces peucetius.